The following is a 139-amino-acid chain: MIKRYEACFLFKSEEIEYKGSLEEVKKSLEFFGATDVVSNFIGERALEYPIKKQARGRYEIIEFSMEGNNLKEFESRLKLIRNLLRYMILVKIVRKINTKKIKRRNFREFRDNIDKDSLKGASKVETPTGPESTDIQEK.

A disordered region spans residues 120-139 (KGASKVETPTGPESTDIQEK). The span at 130 to 139 (GPESTDIQEK) shows a compositional bias: polar residues.

Belongs to the bacterial ribosomal protein bS6 family.

Its function is as follows. Binds together with bS18 to 16S ribosomal RNA. This is Small ribosomal subunit protein bS6 (rpsF) from Borreliella burgdorferi (strain ATCC 35210 / DSM 4680 / CIP 102532 / B31) (Borrelia burgdorferi).